A 160-amino-acid polypeptide reads, in one-letter code: Transcription elongation factor GreA (160 aa).

The stretch at 3–84 forms a coiled coil; sequence SIVNDKILLT…SKAKIIKADL (82 aa).

Belongs to the GreA/GreB family.

Necessary for efficient RNA polymerase transcription elongation past template-encoded arresting sites. The arresting sites in DNA have the property of trapping a certain fraction of elongating RNA polymerases that pass through, resulting in locked ternary complexes. Cleavage of the nascent transcript by cleavage factors such as GreA or GreB allows the resumption of elongation from the new 3'terminus. GreA releases sequences of 2 to 3 nucleotides. This is Transcription elongation factor GreA from Mesomycoplasma hyopneumoniae (strain 7448) (Mycoplasma hyopneumoniae).